We begin with the raw amino-acid sequence, 490 residues long: Acetyl-coenzyme A carboxylase carboxyl transferase subunit beta, chloroplastic (490 aa).

The CoA carboxyltransferase N-terminal domain occupies 221–490 (LWVQCENCYG…PLNQKSSKIK (270 aa)). Zn(2+)-binding residues include Cys225, Cys228, Cys244, and Cys247. The C4-type zinc-finger motif lies at 225–247 (CENCYGLNYKKFLKSKMNICEQC).

Belongs to the AccD/PCCB family. In terms of assembly, acetyl-CoA carboxylase is a heterohexamer composed of biotin carboxyl carrier protein, biotin carboxylase and 2 subunits each of ACCase subunit alpha and ACCase plastid-coded subunit beta (accD). Zn(2+) serves as cofactor. Expressed in leaves, ripening and mature fruit.

It is found in the plastid. Its subcellular location is the chloroplast stroma. It localises to the chromoplast stroma. It catalyses the reaction N(6)-carboxybiotinyl-L-lysyl-[protein] + acetyl-CoA = N(6)-biotinyl-L-lysyl-[protein] + malonyl-CoA. It functions in the pathway lipid metabolism; malonyl-CoA biosynthesis; malonyl-CoA from acetyl-CoA: step 1/1. Functionally, component of the acetyl coenzyme A carboxylase (ACC) complex. Biotin carboxylase (BC) catalyzes the carboxylation of biotin on its carrier protein (BCCP) and then the CO(2) group is transferred by the transcarboxylase to acetyl-CoA to form malonyl-CoA. Is up-regulated upon chromoplast differentiation, presumably for fatty acid biosynthesis. This Solanum lycopersicum (Tomato) protein is Acetyl-coenzyme A carboxylase carboxyl transferase subunit beta, chloroplastic.